A 294-amino-acid chain; its full sequence is Elongation factor Ts (294 aa).

The segment at 81–84 (TDFV) is involved in Mg(2+) ion dislocation from EF-Tu.

It belongs to the EF-Ts family.

Its subcellular location is the cytoplasm. In terms of biological role, associates with the EF-Tu.GDP complex and induces the exchange of GDP to GTP. It remains bound to the aminoacyl-tRNA.EF-Tu.GTP complex up to the GTP hydrolysis stage on the ribosome. The chain is Elongation factor Ts from Hydrogenovibrio crunogenus (strain DSM 25203 / XCL-2) (Thiomicrospira crunogena).